A 209-amino-acid chain; its full sequence is Ribosomal RNA large subunit methyltransferase E (209 aa).

Residues glycine 63, tryptophan 65, aspartate 83, aspartate 99, and aspartate 124 each contribute to the S-adenosyl-L-methionine site. The active-site Proton acceptor is lysine 164.

It belongs to the class I-like SAM-binding methyltransferase superfamily. RNA methyltransferase RlmE family.

It localises to the cytoplasm. The enzyme catalyses uridine(2552) in 23S rRNA + S-adenosyl-L-methionine = 2'-O-methyluridine(2552) in 23S rRNA + S-adenosyl-L-homocysteine + H(+). Its function is as follows. Specifically methylates the uridine in position 2552 of 23S rRNA at the 2'-O position of the ribose in the fully assembled 50S ribosomal subunit. This is Ribosomal RNA large subunit methyltransferase E from Aeromonas salmonicida (strain A449).